Reading from the N-terminus, the 365-residue chain is MSNLSTALNLVPSETQLPVSAYFDEALYQTEIERLFKHGPSYVGHELMVPEVGDYHTLAAEAEGRVLVRNPNGVELLSNVCRHRQAIMLNGRGNAQNIVCPLHRWTYDLKGELLGAPHFERQPCVHLSRSLLQNWNGLLFEGKRDVRNDLARLGVARDLDFSGYMLDHVEVHDCDYNWKTFIEVYLEDYHVVPFHPGLGQFVSCDDLTWEFGEWYSVQTVGIHAGLRKPGTATYQKWHDAVLRFNNGEMPKYGAVWLTYYPNVMVEWYPNVLVVSTLHPMGPGKTRNVVEFYYPEEIVLFEREFVEAERAAYMETCIEDDEIAERMDAGRLALLRRGTSEVGPYQSPMEDGMQHFHEWYRRVMDY.

Residues 44 to 141 (GHELMVPEVG…LQNWNGLLFE (98 aa)) enclose the Rieske domain. Positions 81, 83, 100, and 103 each coordinate [2Fe-2S] cluster.

It belongs to the bacterial ring-hydroxylating dioxygenase alpha subunit family. [2Fe-2S] cluster is required as a cofactor.

Rieske-type iron sulfur protein that can catalyze in vitro the 2-hydroxylation of putrescine, forming 2-hydroxyputrescine. May be involved in the biosynthesis of the cyclic hydroxamate siderophore alcaligin. The chain is Putrescine 2-hydroxylase from Ralstonia nicotianae (strain ATCC BAA-1114 / GMI1000) (Ralstonia solanacearum).